Here is a 181-residue protein sequence, read N- to C-terminus: Capsid protein VP4 (181 aa).

Its subcellular location is the virion. Functionally, VP4 self-assembles to form, together with capsid protein VP10, an icosahedral caspid of 87 nm in diameter, with a T=43 symmetry and composed of 420 hexamers and 12 pentamers. VP4 proteins arrange into hexons, while VP10 proteins form the pentameric densities located at the 5-fold axes in the virion. The stoichiometry of VP4:VP10 is 42:1. In Sulfolobus (SPV1), this protein is Capsid protein VP4.